Reading from the N-terminus, the 538-residue chain is Cytochrome P450 monooxygenase verH (538 aa).

The helical transmembrane segment at Val-2–Ser-21 threads the bilayer. Cys-445 contacts heme.

The protein belongs to the cytochrome P450 family. The cofactor is heme.

It localises to the membrane. Its pathway is secondary metabolite biosynthesis; terpenoid biosynthesis. The protein operates within mycotoxin biosynthesis. Its function is as follows. Cytochrome P450 monooxygenase; part of the gene cluster that mediates the biosynthesis of the neurotoxin verrucosidin, a methylated alpha-pyrone polyketide that inhibits oxidative phosphorylation in mitochondria and thereby causes neurological diseases. The carbon backbone of verrucosidin is synthesized by the HR-PKS verA, and further modified by the other verrucodidin cluster enzymes. This Penicillium polonicum protein is Cytochrome P450 monooxygenase verH.